Reading from the N-terminus, the 439-residue chain is ATP-dependent protease ATPase subunit HslU (439 aa).

Residues Ile17, 59 to 64 (GVGKTE), Asp251, Glu317, and Arg389 contribute to the ATP site.

This sequence belongs to the ClpX chaperone family. HslU subfamily. In terms of assembly, a double ring-shaped homohexamer of HslV is capped on each side by a ring-shaped HslU homohexamer. The assembly of the HslU/HslV complex is dependent on binding of ATP.

It localises to the cytoplasm. In terms of biological role, ATPase subunit of a proteasome-like degradation complex; this subunit has chaperone activity. The binding of ATP and its subsequent hydrolysis by HslU are essential for unfolding of protein substrates subsequently hydrolyzed by HslV. HslU recognizes the N-terminal part of its protein substrates and unfolds these before they are guided to HslV for hydrolysis. This is ATP-dependent protease ATPase subunit HslU from Campylobacter jejuni subsp. jejuni serotype O:2 (strain ATCC 700819 / NCTC 11168).